We begin with the raw amino-acid sequence, 399 residues long: Succinate--CoA ligase [ADP-forming] subunit beta (399 aa).

The region spanning 9 to 254 is the ATP-grasp domain; that stretch reads KELLAKYGIG…ETEEDPAEVE (246 aa). ATP is bound by residues lysine 46, 53 to 55, valine 112, and glutamate 117; that span reads GRG. Mg(2+) contacts are provided by asparagine 209 and aspartate 223. Substrate-binding positions include asparagine 274 and 331–333; that span reads GIM.

The protein belongs to the succinate/malate CoA ligase beta subunit family. As to quaternary structure, heterotetramer of two alpha and two beta subunits. Mg(2+) serves as cofactor.

It catalyses the reaction succinate + ATP + CoA = succinyl-CoA + ADP + phosphate. The enzyme catalyses GTP + succinate + CoA = succinyl-CoA + GDP + phosphate. It participates in carbohydrate metabolism; tricarboxylic acid cycle; succinate from succinyl-CoA (ligase route): step 1/1. Functionally, succinyl-CoA synthetase functions in the citric acid cycle (TCA), coupling the hydrolysis of succinyl-CoA to the synthesis of either ATP or GTP and thus represents the only step of substrate-level phosphorylation in the TCA. The beta subunit provides nucleotide specificity of the enzyme and binds the substrate succinate, while the binding sites for coenzyme A and phosphate are found in the alpha subunit. In Erythrobacter litoralis (strain HTCC2594), this protein is Succinate--CoA ligase [ADP-forming] subunit beta.